A 146-amino-acid chain; its full sequence is ATP synthase epsilon chain (146 aa).

The interval 103-122 is disordered; the sequence is SAKKRAEQHMQEAKEKHNER.

The protein belongs to the ATPase epsilon chain family. In terms of assembly, F-type ATPases have 2 components, CF(1) - the catalytic core - and CF(0) - the membrane proton channel. CF(1) has five subunits: alpha(3), beta(3), gamma(1), delta(1), epsilon(1). CF(0) has three main subunits: a, b and c.

The protein resides in the cell membrane. In terms of biological role, produces ATP from ADP in the presence of a proton gradient across the membrane. The chain is ATP synthase epsilon chain from Lactobacillus johnsonii (strain CNCM I-12250 / La1 / NCC 533).